The chain runs to 198 residues: Recombination protein RecR (198 aa).

The C4-type zinc-finger motif lies at 56-71 (CHVCGNVDTGDPCGIC). A Toprim domain is found at 79–174 (RMLCVVEEVA…RLTQLAHGLP (96 aa)).

It belongs to the RecR family.

In terms of biological role, may play a role in DNA repair. It seems to be involved in an RecBC-independent recombinational process of DNA repair. It may act with RecF and RecO. This chain is Recombination protein RecR, found in Rhizorhabdus wittichii (strain DSM 6014 / CCUG 31198 / JCM 15750 / NBRC 105917 / EY 4224 / RW1) (Sphingomonas wittichii).